The primary structure comprises 233 residues: Large ribosomal subunit protein uL1 (233 aa).

It belongs to the universal ribosomal protein uL1 family. In terms of assembly, part of the 50S ribosomal subunit.

Its function is as follows. Binds directly to 23S rRNA. The L1 stalk is quite mobile in the ribosome, and is involved in E site tRNA release. Protein L1 is also a translational repressor protein, it controls the translation of the L11 operon by binding to its mRNA. The sequence is that of Large ribosomal subunit protein uL1 from Geobacillus kaustophilus (strain HTA426).